Reading from the N-terminus, the 265-residue chain is Acetylglutamate kinase (265 aa).

Substrate is bound by residues 41 to 42, arginine 63, and asparagine 156; that span reads GG.

It belongs to the acetylglutamate kinase family. ArgB subfamily.

Its subcellular location is the cytoplasm. It catalyses the reaction N-acetyl-L-glutamate + ATP = N-acetyl-L-glutamyl 5-phosphate + ADP. Its pathway is amino-acid biosynthesis; L-arginine biosynthesis; N(2)-acetyl-L-ornithine from L-glutamate: step 2/4. In terms of biological role, catalyzes the ATP-dependent phosphorylation of N-acetyl-L-glutamate. This is Acetylglutamate kinase from Oceanobacillus iheyensis (strain DSM 14371 / CIP 107618 / JCM 11309 / KCTC 3954 / HTE831).